Consider the following 278-residue polypeptide: MEENMEEGQTQKGCFECCIKCLGGIPYASLIATILLYAGVALFCGCGHEALSGTVNILQTYFEMARTAGDTLDVFTMIDIFKYVIYGIAAAFFVYGILLMVEGFFTTGAIKDLYGDFKITTCGRCVSAWFIMLTYLFMLAWLGVTAFTSLPVYMYFNVWTICRNTTLVEGANLCLDLRQFGIVTIGEEKKICTVSENFLRMCESTELNMTFHLFIVALAGAGAAVIAMVHYLMVLSANWAYVKDACRMQKYEDIKSKEEQELHDIHSTRSKERLNAYT.

Met1 bears the N-acetylmethionine mark. The Cytoplasmic portion of the chain corresponds to 1–22; sequence MEENMEEGQTQKGCFECCIKCL. A helical membrane pass occupies residues 23-43; sequence GGIPYASLIATILLYAGVALF. Over 44–84 the chain is Extracellular; the sequence is CGCGHEALSGTVNILQTYFEMARTAGDTLDVFTMIDIFKYV. Residues 85 to 105 form a helical membrane-spanning segment; the sequence is IYGIAAAFFVYGILLMVEGFF. Residues 106–127 lie on the Cytoplasmic side of the membrane; the sequence is TTGAIKDLYGDFKITTCGRCVS. A helical transmembrane segment spans residues 128 to 148; it reads AWFIMLTYLFMLAWLGVTAFT. Over 149 to 213 the chain is Extracellular; that stretch reads SLPVYMYFNV…STELNMTFHL (65 aa). Asn164 is a glycosylation site (N-linked (GlcNAc...) asparagine). Cysteines 174 and 192 form a disulfide. Asn208 carries N-linked (GlcNAc...) asparagine glycosylation. The chain crosses the membrane as a helical span at residues 214–234; that stretch reads FIVALAGAGAAVIAMVHYLMV. Residues 235–278 are Cytoplasmic-facing; the sequence is LSANWAYVKDACRMQKYEDIKSKEEQELHDIHSTRSKERLNAYT. Phosphoserine is present on Ser256. Thr278 carries the post-translational modification Phosphothreonine.

The protein belongs to the myelin proteolipid protein family. In terms of assembly, interacts with OPRM1. Interacts with palmitoyltransferase ZDHHC17/HIP14; the interaction leads to palmitoylation of GPM6A. In terms of processing, N-glycosylated. Post-translationally, palmitoylated by ZDHHC17/HIP14. As to expression, expressed in hippocampus (at protein level). Isoform 1 is the predominant isoform expressed in brain, specifically in hippocampus. Isoform 2 is expressed at low levels in brain and kidney.

It localises to the cell membrane. The protein localises to the cell projection. It is found in the axon. Its subcellular location is the growth cone. The protein resides in the dendritic spine. It localises to the filopodium. The protein localises to the neuron projection. Involved in neuronal differentiation, including differentiation and migration of neuronal stem cells. Plays a role in neuronal plasticity and is involved in neurite and filopodia outgrowth, filopodia motility and probably synapse formation. Gpm6a-induced filopodia formation involves mitogen-activated protein kinase (MAPK) and Src signaling pathways. May be involved in neuronal NGF-dependent Ca(2+) influx. May be involved in regulation of endocytosis and intracellular trafficking of G-protein-coupled receptors (GPCRs); enhances internalization and recycling of mu-type opioid receptor. The sequence is that of Neuronal membrane glycoprotein M6-a (Gpm6a) from Rattus norvegicus (Rat).